Reading from the N-terminus, the 262-residue chain is Intron-encoded DNA endonuclease ai2b (262 aa).

Belongs to the LAGLIDADG endonuclease family.

It localises to the mitochondrion. In terms of biological role, mitochondrial DNA endonuclease involved in intron homing. This Dictyostelium discoideum (Social amoeba) protein is Intron-encoded DNA endonuclease ai2b (ai2b).